A 420-amino-acid polypeptide reads, in one-letter code: 4-hydroxy-3-methylbut-2-en-1-yl diphosphate synthase (flavodoxin) (420 aa).

[4Fe-4S] cluster is bound by residues cysteine 307, cysteine 310, cysteine 353, and glutamate 360.

It belongs to the IspG family. [4Fe-4S] cluster serves as cofactor.

The catalysed reaction is (2E)-4-hydroxy-3-methylbut-2-enyl diphosphate + oxidized [flavodoxin] + H2O + 2 H(+) = 2-C-methyl-D-erythritol 2,4-cyclic diphosphate + reduced [flavodoxin]. It participates in isoprenoid biosynthesis; isopentenyl diphosphate biosynthesis via DXP pathway; isopentenyl diphosphate from 1-deoxy-D-xylulose 5-phosphate: step 5/6. Functionally, converts 2C-methyl-D-erythritol 2,4-cyclodiphosphate (ME-2,4cPP) into 1-hydroxy-2-methyl-2-(E)-butenyl 4-diphosphate. The polypeptide is 4-hydroxy-3-methylbut-2-en-1-yl diphosphate synthase (flavodoxin) (Brucella abortus (strain S19)).